We begin with the raw amino-acid sequence, 284 residues long: Tropomyosin Pen a 1.0102 (284 aa).

A disordered region spans residues Met-1–Gln-51. Residues Met-1–Glu-273 are a coiled coil. Residues Lys-12–Asn-45 show a composition bias toward basic and acidic residues. IgE-binding stretches follow at residues Val-43–Leu-57, Val-85–Arg-105, Arg-133–Phe-153, Glu-187–Asn-202, Gln-247–Tyr-284, Leu-249–Leu-260, and Lys-266–Leu-281.

It belongs to the tropomyosin family. Homodimer.

Its function is as follows. Tropomyosin, in association with the troponin complex, plays a central role in the calcium dependent regulation of muscle contraction. The chain is Tropomyosin Pen a 1.0102 from Penaeus aztecus (Brown shrimp).